Consider the following 291-residue polypeptide: Tyrosine recombinase XerD (291 aa).

In terms of domain architecture, Core-binding (CB) spans 1–82 (MEEGLIDRLL…ACKRLYIWME (82 aa)). A Tyr recombinase domain is found at 103-285 (NIPTLITEQQ…ANVWLQGVVK (183 aa)). Catalysis depends on residues arginine 143, lysine 167, histidine 237, arginine 240, and histidine 263. Residue tyrosine 272 is the O-(3'-phospho-DNA)-tyrosine intermediate of the active site.

It belongs to the 'phage' integrase family. XerD subfamily. In terms of assembly, forms a cyclic heterotetrameric complex composed of two molecules of XerC and two molecules of XerD.

It localises to the cytoplasm. In terms of biological role, site-specific tyrosine recombinase, which acts by catalyzing the cutting and rejoining of the recombining DNA molecules. The XerC-XerD complex is essential to convert dimers of the bacterial chromosome into monomers to permit their segregation at cell division. It also contributes to the segregational stability of plasmids. In Neisseria meningitidis serogroup A / serotype 4A (strain DSM 15465 / Z2491), this protein is Tyrosine recombinase XerD.